A 181-amino-acid polypeptide reads, in one-letter code: Cytochrome c-type biogenesis protein CcmE (181 aa).

The Cytoplasmic portion of the chain corresponds to 1–8; sequence MNPRRKSR. Residues 9–29 form a helical; Signal-anchor for type II membrane protein membrane-spanning segment; it reads LKVVVSIIFGVAVAAGLTLYA. Residues 30-181 lie on the Periplasmic side of the membrane; it reads LSQNIDLFYT…TLKTLQGEAN (152 aa). The heme site is built by His131 and Tyr135. 2 stretches are compositionally biased toward basic and acidic residues: residues 135 to 148 and 156 to 166; these read YMPP…KEQH and ADLKGTSARDK. Positions 135–166 are disordered; it reads YMPPELGDKLKEQHGAAGISEADLKGTSARDK.

It belongs to the CcmE/CycJ family.

The protein localises to the cell inner membrane. Its function is as follows. Heme chaperone required for the biogenesis of c-type cytochromes. Transiently binds heme delivered by CcmC and transfers the heme to apo-cytochromes in a process facilitated by CcmF and CcmH. In Actinobacillus pleuropneumoniae serotype 7 (strain AP76), this protein is Cytochrome c-type biogenesis protein CcmE.